The primary structure comprises 439 residues: General transcription factor IIE subunit 1 (439 aa).

N-acetylalanine is present on alanine 2. One can recognise an HTH TFE/IIEalpha-type domain in the interval 14–104; the sequence is LKRLAKYVIR…NYRTLVNVVK (91 aa). Residue lysine 67 is modified to N6-acetyllysine. 4 residues coordinate Zn(2+): cysteine 129, cysteine 132, cysteine 154, and cysteine 157. A C4-type zinc finger spans residues 129–157; it reads CPVCSSTFTDLEANQLFDPMTGTFRCTFC. Serine 268 carries the post-translational modification Phosphoserine. Over residues 333 to 344 the composition is skewed to low complexity; sequence SSAMAGSVGAAA. The disordered stretch occupies residues 333–392; the sequence is SSAMAGSVGAAAPVTTANGSDSESETSESDDDSPPRPAAVAVHKREEDEEEDDEFEEVAD. 2 stretches are compositionally biased toward acidic residues: residues 354 to 364 and 379 to 392; these read SESETSESDDD and EDEEEDDEFEEVAD.

The protein belongs to the TFIIE alpha subunit family. As to quaternary structure, tetramer of two alpha and two beta chains. Interacts with TAF6/TAFII80. Interacts with ATF7IP. Interacts with SND1. Part of TBP-based Pol II pre-initiation complex (PIC), in which Pol II core assembles with general transcription factors and other specific initiation factors including GTF2E1, GTF2E2, GTF2F1, GTF2F2, TCEA1, ERCC2, ERCC3, GTF2H2, GTF2H3, GTF2H4, GTF2H5, GTF2A1, GTF2A2, GTF2B and TBP; this large multi-subunit PIC complex mediates DNA unwinding and targets Pol II core to the transcription start site where the first phosphodiester bond forms.

The protein resides in the nucleus. Functionally, recruits TFIIH to the initiation complex and stimulates the RNA polymerase II C-terminal domain kinase and DNA-dependent ATPase activities of TFIIH. Both TFIIH and TFIIE are required for promoter clearance by RNA polymerase. The protein is General transcription factor IIE subunit 1 (GTF2E1) of Pongo abelii (Sumatran orangutan).